The following is an 863-amino-acid chain: Envelope glycoprotein gp160 (863 aa).

Positions 1–32 (MIVTMKAMEKRNKKLWTLYLAMALITPCLSLR) are cleaved as a signal peptide. Residues 33–684 (QLYATVYAGV…ITKWLWYIKI (652 aa)) are Extracellular-facing. Cys-54 and Cys-74 are joined by a disulfide. N-linked (GlcNAc...) asparagine; by host glycans are attached at residues Asn-59 and Asn-88. 5 disulfides stabilise this stretch: Cys-119/Cys-201, Cys-126/Cys-192, Cys-131/Cys-146, Cys-214/Cys-243, and Cys-224/Cys-235. Residues 131–145 (CTNIAGTTNENLMKK) form a V1 region. The segment at 146–192 (CEFNVTTVIKDKKEKKQALFYVSDLMELNETSSTNKTNSKMYTLTNC) is V2. N-linked (GlcNAc...) asparagine; by host glycosylation is found at Asn-149, Asn-174, Asn-180, Asn-193, Asn-225, Asn-230, Asn-237, Asn-258, Asn-285, Asn-289, Asn-320, Asn-330, Asn-350, Asn-356, and Asn-360. Residues 292–326 (CERPQIDIQEMRIGPMAWYSMGIGGTAGNSSRAAY) are V3. Cys-292 and Cys-327 form a disulfide bridge. Residues 362 to 372 (SSGGDLEVTHL) form a CD4-binding loop region. 2 disulfides stabilise this stretch: Cys-376-Cys-442 and Cys-383-Cys-415. Residues 383–415 (CNTAKMFNYTFSCNGTTCSVSNVSQGNNGTLPC) are V4. N-linked (GlcNAc...) asparagine; by host glycosylation is found at Asn-390, Asn-396, Asn-404, Asn-410, Asn-439, Asn-445, Asn-458, and Asn-463. V5 regions lie at residues 458–469 (NSSNNNVTFRPI) and 460–469 (SNNNVTFRPI). Residues 514 to 534 (AVGLGMLFLGVLSAAGSTMGA) form a fusion peptide region. Residues 576–594 (RQLRARLLALETLLQNQQL) form an immunosuppression region. Cys-600 and Cys-606 form a disulfide bridge. 3 N-linked (GlcNAc...) asparagine; by host glycosylation sites follow: Asn-613, Asn-619, and Asn-637. Positions 633 to 667 (RQISNISSTIYEEIQKAQVQQEQNEKKLLELDEWA) form a coiled coil. The segment at 662–683 (ELDEWASIWNWLDITKWLWYIK) is MPER; binding to GalCer. Residues 685 to 705 (AIIIVGALVGVRVIMIVLNIV) traverse the membrane as a helical segment. The Cytoplasmic portion of the chain corresponds to 706–863 (KNIRQGYQPL…IRQGLERSLL (158 aa)). A YXXL motif; contains endocytosis signal motif is present at residues 712–715 (YQPL). A Di-leucine internalization motif motif is present at residues 862 to 863 (LL).

The protein belongs to the HIV-1 env protein family. The mature envelope protein (Env) consists of a homotrimer of non-covalently associated gp120-gp41 heterodimers. The resulting complex protrudes from the virus surface as a spike. There seems to be as few as 10 spikes on the average virion. Interacts with host CD4, CCR5 and CXCR4. Gp120 also interacts with the C-type lectins CD209/DC-SIGN and CLEC4M/DC-SIGNR (collectively referred to as DC-SIGN(R)). Gp120 and gp41 interact with GalCer. Gp120 interacts with host ITGA4/ITGB7 complex; on CD4+ T-cells, this interaction results in rapid activation of integrin ITGAL/LFA-1, which facilitates efficient cell-to-cell spreading of HIV-1. Gp120 interacts with cell-associated heparan sulfate; this interaction increases virus infectivity on permissive cells and may be involved in infection of CD4- cells. As to quaternary structure, the mature envelope protein (Env) consists of a homotrimer of non-covalently associated gp120-gp41 heterodimers. The resulting complex protrudes from the virus surface as a spike. There seems to be as few as 10 spikes on the average virion. Post-translationally, highly glycosylated by host. The high number of glycan on the protein is reffered to as 'glycan shield' because it contributes to hide protein sequence from adaptive immune system. In terms of processing, palmitoylation of the transmembrane protein and of Env polyprotein (prior to its proteolytic cleavage) is essential for their association with host cell membrane lipid rafts. Palmitoylation is therefore required for envelope trafficking to classical lipid rafts, but not for viral replication. Specific enzymatic cleavages in vivo yield mature proteins. Envelope glycoproteins are synthesized as an inactive precursor that is heavily N-glycosylated and processed likely by host cell furin in the Golgi to yield the mature SU and TM proteins. The cleavage site between SU and TM requires the minimal sequence [KR]-X-[KR]-R. About 2 of the 9 disulfide bonds of gp41 are reduced by P4HB/PDI, following binding to CD4 receptor.

Its subcellular location is the virion membrane. The protein resides in the host cell membrane. It is found in the host endosome membrane. Oligomerizes in the host endoplasmic reticulum into predominantly trimers. In a second time, gp160 transits in the host Golgi, where glycosylation is completed. The precursor is then proteolytically cleaved in the trans-Golgi and thereby activated by cellular furin or furin-like proteases to produce gp120 and gp41. Its function is as follows. Attaches the virus to the host lymphoid cell by binding to the primary receptor CD4. This interaction induces a structural rearrangement creating a high affinity binding site for a chemokine coreceptor like CXCR4 and/or CCR5. Acts as a ligand for CD209/DC-SIGN and CLEC4M/DC-SIGNR, which are respectively found on dendritic cells (DCs), and on endothelial cells of liver sinusoids and lymph node sinuses. These interactions allow capture of viral particles at mucosal surfaces by these cells and subsequent transmission to permissive cells. HIV subverts the migration properties of dendritic cells to gain access to CD4+ T-cells in lymph nodes. Virus transmission to permissive T-cells occurs either in trans (without DCs infection, through viral capture and transmission), or in cis (following DCs productive infection, through the usual CD4-gp120 interaction), thereby inducing a robust infection. In trans infection, bound virions remain infectious over days and it is proposed that they are not degraded, but protected in non-lysosomal acidic organelles within the DCs close to the cell membrane thus contributing to the viral infectious potential during DCs' migration from the periphery to the lymphoid tissues. On arrival at lymphoid tissues, intact virions recycle back to DCs' cell surface allowing virus transmission to CD4+ T-cells. Functionally, acts as a class I viral fusion protein. Under the current model, the protein has at least 3 conformational states: pre-fusion native state, pre-hairpin intermediate state, and post-fusion hairpin state. During fusion of viral and target intracellular membranes, the coiled coil regions (heptad repeats) assume a trimer-of-hairpins structure, positioning the fusion peptide in close proximity to the C-terminal region of the ectodomain. The formation of this structure appears to drive apposition and subsequent fusion of viral and target cell membranes. Complete fusion occurs in host cell endosomes and is dynamin-dependent, however some lipid transfer might occur at the plasma membrane. The virus undergoes clathrin-dependent internalization long before endosomal fusion, thus minimizing the surface exposure of conserved viral epitopes during fusion and reducing the efficacy of inhibitors targeting these epitopes. Membranes fusion leads to delivery of the nucleocapsid into the cytoplasm. The polypeptide is Envelope glycoprotein gp160 (Human immunodeficiency virus type 1 group O (isolate ANT70) (HIV-1)).